The chain runs to 229 residues: Uridylate cyclase (229 aa).

A Guanylate cyclase domain is found at 47-178 (TVLYADLDGS…RAANYAAKLT (132 aa)). Tyr50 is a binding site for a ribonucleoside 5'-triphosphate. 2 residues coordinate Mn(2+): Asp52 and Asp96. Residue Arg97 participates in a ribonucleoside 5'-triphosphate binding.

The protein belongs to the adenylyl cyclase class-4/guanylyl cyclase family. Pyrimidine cyclase subfamily. As to quaternary structure, homodimer. Mn(2+) is required as a cofactor.

The protein resides in the cytoplasm. The catalysed reaction is UTP = 3',5'-cyclic UMP + diphosphate. Its function is as follows. Pycsar (pyrimidine cyclase system for antiphage resistance) provides immunity against bacteriophage. The pyrimidine cyclase (PycC) synthesizes cyclic nucleotides in response to infection; these serve as specific second messenger signals. The signals activate the adjacent effector, leading to bacterial cell death and abortive phage infection. A clade B Pycsar system. Functionally, the pyrimidine cyclase gene of a two-gene Pycsar system, generates cyclic UMP (cUMP) from UTP, has little to no activity on ATP, CTP or GTP. Expression of this and adjacent effector BcPycTIR (AC A0A0J5WTU0) probably confers resistance to bacteriophage. The genes are probably only expressed in response to bacteriophage infection. The protein is Uridylate cyclase of Burkholderia cepacia (Pseudomonas cepacia).